A 482-amino-acid polypeptide reads, in one-letter code: Mannose-1-phosphate guanylyltransferase 2 (482 aa).

The protein belongs to the mannose-6-phosphate isomerase type 2 family.

The catalysed reaction is alpha-D-mannose 1-phosphate + GTP + H(+) = GDP-alpha-D-mannose + diphosphate. The protein operates within nucleotide-sugar biosynthesis; GDP-alpha-D-mannose biosynthesis; GDP-alpha-D-mannose from alpha-D-mannose 1-phosphate (GTP route): step 1/1. In terms of biological role, involved in GDP-mannose biosynthesis which serves as the activated sugar nucleotide precursor for mannose residues in cell surface polysaccharides. This enzyme participates in synthesis of the LPS O antigen. This chain is Mannose-1-phosphate guanylyltransferase 2 (manC2), found in Escherichia coli O157:H7.